The following is a 490-amino-acid chain: Betaine aldehyde dehydrogenase (490 aa).

D93 is a binding site for K(+). 150 to 152 provides a ligand contact to NAD(+); sequence GAW. Residue K162 is the Charge relay system of the active site. Residue 176–179 participates in NAD(+) binding; the sequence is KPSE. V180 is a K(+) binding site. 230 to 233 is an NAD(+) binding site; sequence GIAS. A K(+)-binding site is contributed by L246. Residue E252 is the Proton acceptor of the active site. NAD(+)-binding residues include G254, C286, and E387. The active-site Nucleophile is the C286. At C286 the chain carries Cysteine sulfenic acid (-SOH). The K(+) site is built by K457 and G460. E464 functions as the Charge relay system in the catalytic mechanism.

It belongs to the aldehyde dehydrogenase family. In terms of assembly, dimer of dimers. It depends on K(+) as a cofactor.

It catalyses the reaction betaine aldehyde + NAD(+) + H2O = glycine betaine + NADH + 2 H(+). The protein operates within amine and polyamine biosynthesis; betaine biosynthesis via choline pathway; betaine from betaine aldehyde: step 1/1. In terms of biological role, involved in the biosynthesis of the osmoprotectant glycine betaine. Catalyzes the irreversible oxidation of betaine aldehyde to the corresponding acid. This Yersinia pseudotuberculosis serotype I (strain IP32953) protein is Betaine aldehyde dehydrogenase.